Reading from the N-terminus, the 436-residue chain is Serine/threonine-protein kinase 40 (436 aa).

A compositionally biased stretch (basic and acidic residues) spans 1 to 10 (MKRRASDRGA). The segment at 1-25 (MKRRASDRGAGETSARAKALGSGIS) is disordered. Residues 35–332 (FILGPRLGNS…DVLEALSSII (298 aa)) form the Protein kinase domain. ATP contacts are provided by residues 41–49 (LGNSPVPSI) and Lys66. Asp197 serves as the catalytic Proton acceptor. Positions 396–417 (RSWVPKRQSGAGVPPVRRLGHD) are disordered.

This sequence belongs to the protein kinase superfamily. CAMK Ser/Thr protein kinase family.

The protein localises to the nucleus. Its subcellular location is the cytoplasm. The catalysed reaction is L-seryl-[protein] + ATP = O-phospho-L-seryl-[protein] + ADP + H(+). The enzyme catalyses L-threonyl-[protein] + ATP = O-phospho-L-threonyl-[protein] + ADP + H(+). Functionally, may be a negative regulator of NF-kappa-B and p53-mediated gene transcription. This Bos taurus (Bovine) protein is Serine/threonine-protein kinase 40 (STK40).